The sequence spans 336 residues: MAKVYYEKDVTVNVLKEKKVAIIGYGSQGHAHAQNLRDNGFDVVVGLRKGKSWDKAKEDGFSVYTVAEAAKQADVVMILLPDELQPEVYEEEIAPNLQAGNSLVFAHGFNVHFDQVKPPVNVDVFLVAPKGPGHLVRRTFSEGGAVPALFAVYQDATGVATEKALSYADGIGATRAGVLETTFKEETETDLFGEQAVLCGGVTALVKAGFETLVDAGYQPELAYFECLHELKLIVDLMYEGGLENMRYSVSDTAQWGDFVSGPRVVTEDTKKAMGTVLAEIQDGTFARGWIAEHKAGKPNFYATNEKENEHEIEVVGRKLRGMMPFVQPRVKAGVK.

The KARI N-terminal Rossmann domain maps to 2–181 (AKVYYEKDVT…GATRAGVLET (180 aa)). NADP(+) is bound by residues 25–28 (YGSQ), R48, S52, and 82–85 (DELQ). The active site involves H107. NADP(+) is bound at residue G133. The 146-residue stretch at 182–327 (TFKEETETDL…RKLRGMMPFV (146 aa)) folds into the KARI C-terminal knotted domain. Residues D190, E194, E226, and E230 each contribute to the Mg(2+) site. A substrate-binding site is contributed by S251.

The protein belongs to the ketol-acid reductoisomerase family. It depends on Mg(2+) as a cofactor.

The catalysed reaction is (2R)-2,3-dihydroxy-3-methylbutanoate + NADP(+) = (2S)-2-acetolactate + NADPH + H(+). It catalyses the reaction (2R,3R)-2,3-dihydroxy-3-methylpentanoate + NADP(+) = (S)-2-ethyl-2-hydroxy-3-oxobutanoate + NADPH + H(+). The protein operates within amino-acid biosynthesis; L-isoleucine biosynthesis; L-isoleucine from 2-oxobutanoate: step 2/4. It participates in amino-acid biosynthesis; L-valine biosynthesis; L-valine from pyruvate: step 2/4. Functionally, involved in the biosynthesis of branched-chain amino acids (BCAA). Catalyzes an alkyl-migration followed by a ketol-acid reduction of (S)-2-acetolactate (S2AL) to yield (R)-2,3-dihydroxy-isovalerate. In the isomerase reaction, S2AL is rearranged via a Mg-dependent methyl migration to produce 3-hydroxy-3-methyl-2-ketobutyrate (HMKB). In the reductase reaction, this 2-ketoacid undergoes a metal-dependent reduction by NADPH to yield (R)-2,3-dihydroxy-isovalerate. The sequence is that of Ketol-acid reductoisomerase (NADP(+)) 1 from Bacillus anthracis.